The chain runs to 584 residues: MPIRILPSDLSSQISAGEIIERPASVVKEIIENSIDAGSKNINIIVENSGFQSIILKDDGCGIDKKDLLLAVCHHATSKINSLSDLDKLTTFGFRGEALASIRAVSRLTLISCTRFNDVAAKIYLEGFCSKNIILQPIAHPEGTTIIVDNLFYNIPVRLKFLKNKKLEFSKICEVVKKIALSHFYINFSLKHNNKLITQYNSINNRKNKINRLKDIFDTLDTSEFLEIKEKKYRMVLFGWISHPYNFKKIKNIQYCYVNNRYLYNNIFVNAVRAAYSKIEQKKNISFVLYLTIESFNIDINIHPTKNEIKFHNPDVVYTFIYEAVFSYLKKIKEKYYFNFSCKKQTQLNKEKEFYFYDSDPTFLTLISSIFFKKKQIFKNIKNKIKHNNFISKSTPLEKYESSIGRLLIIIHKYYGLIYHDNNFLLLSFPVAKGIVRKQKLKNNIQKENIIEYFLSNIKINLTSQEYLILFNKKEILSKFGFHLIFKKKYVILSSIPAFLKKCNFHIIISNFFAFLFLKKQVFISDIVDWFYINVFIELKNWTYIRGIEVLLEIEYYCPLLLINPPSKLLQKININAALCILKI.

This sequence belongs to the DNA mismatch repair MutL/HexB family.

Functionally, this protein is involved in the repair of mismatches in DNA. It is required for dam-dependent methyl-directed DNA mismatch repair. May act as a 'molecular matchmaker', a protein that promotes the formation of a stable complex between two or more DNA-binding proteins in an ATP-dependent manner without itself being part of a final effector complex. The chain is DNA mismatch repair protein MutL from Buchnera aphidicola subsp. Acyrthosiphon pisum (strain 5A).